The following is a 252-amino-acid chain: Hydroxyacylglutathione hydrolase (252 aa).

7 residues coordinate Zn(2+): His-54, His-56, Asp-58, His-59, His-111, Asp-130, and His-170.

This sequence belongs to the metallo-beta-lactamase superfamily. Glyoxalase II family. As to quaternary structure, monomer. It depends on Zn(2+) as a cofactor.

The enzyme catalyses an S-(2-hydroxyacyl)glutathione + H2O = a 2-hydroxy carboxylate + glutathione + H(+). It functions in the pathway secondary metabolite metabolism; methylglyoxal degradation; (R)-lactate from methylglyoxal: step 2/2. In terms of biological role, thiolesterase that catalyzes the hydrolysis of S-D-lactoyl-glutathione to form glutathione and D-lactic acid. This Francisella tularensis subsp. holarctica (strain FTNF002-00 / FTA) protein is Hydroxyacylglutathione hydrolase.